Here is a 308-residue protein sequence, read N- to C-terminus: UDP-N-acetylenolpyruvoylglucosamine reductase (308 aa).

Residues 32–196 (VGGPAARLYK…ISAKLQLSPG (165 aa)) form the FAD-binding PCMH-type domain. The active site involves R176. S225 serves as the catalytic Proton donor. Residue E296 is part of the active site.

It belongs to the MurB family. Requires FAD as cofactor.

The protein resides in the cytoplasm. It carries out the reaction UDP-N-acetyl-alpha-D-muramate + NADP(+) = UDP-N-acetyl-3-O-(1-carboxyvinyl)-alpha-D-glucosamine + NADPH + H(+). It functions in the pathway cell wall biogenesis; peptidoglycan biosynthesis. In terms of biological role, cell wall formation. The chain is UDP-N-acetylenolpyruvoylglucosamine reductase from Legionella pneumophila subsp. pneumophila (strain Philadelphia 1 / ATCC 33152 / DSM 7513).